The chain runs to 734 residues: Diacylglycerol kinase alpha (734 aa).

EF-hand domains lie at 109–144 (RPED…MMRM) and 154–189 (ELRP…TVPL). Ca(2+)-binding residues include Asp-122, Asp-124, Asn-126, Glu-133, Asp-167, Asp-169, Ser-171, Ser-173, and Glu-178. 2 consecutive Phorbol-ester/DAG-type zinc fingers follow at residues 204–252 (QHMW…ALPC) and 268–318 (THVW…GHEC). Positions 358–505 (NLSTSEALRI…MDRWSVEVIP (148 aa)) are necessary and sufficient for the diacylglycerol kinase activity. One can recognise a DAGKc domain in the interval 371-505 (SNTHPLLVFV…MDRWSVEVIP (135 aa)). The residue at position 483 (Lys-483) is an N6-acetyllysine.

It belongs to the eukaryotic diacylglycerol kinase family. In terms of assembly, monomer.

It localises to the cytoplasm. The protein localises to the cytosol. It catalyses the reaction a 1,2-diacyl-sn-glycerol + ATP = a 1,2-diacyl-sn-glycero-3-phosphate + ADP + H(+). It carries out the reaction a 1-O-alkyl-sn-glycerol + ATP = a 1-O-alkyl-sn-glycero-3-phosphate + ADP + H(+). The enzyme catalyses 1-O-alkyl-2-acyl-sn-glycerol + ATP = 1-O-alkyl-2-acyl-sn-glycero-3-phosphate + ADP + H(+). The catalysed reaction is 1,2-dihexadecanoyl-sn-glycerol + ATP = 1,2-dihexadecanoyl-sn-glycero-3-phosphate + ADP + H(+). It catalyses the reaction 1-hexadecanoyl-2-(9Z-octadecenoyl)-sn-glycerol + ATP = 1-hexadecanoyl-2-(9Z-octadecenoyl)-sn-glycero-3-phosphate + ADP + H(+). It carries out the reaction 2-(9Z-octadecenoyl)-glycerol + ATP = 2-(9Z-octadecenoyl)-sn-glycero-3-phosphate + ADP + H(+). The enzyme catalyses 1,2-di-(9Z-octadecenoyl)-sn-glycerol + ATP = 1,2-di-(9Z-octadecenoyl)-sn-glycero-3-phosphate + ADP + H(+). The catalysed reaction is 1-octadecanoyl-2-(5Z,8Z,11Z,14Z-eicosatetraenoyl)-sn-glycerol + ATP = 1-octadecanoyl-2-(5Z,8Z,11Z,14Z-eicosatetraenoyl)-sn-glycero-3-phosphate + ADP + H(+). It catalyses the reaction 1,2-didecanoyl-sn-glycerol + ATP = 1,2-didecanoyl-sn-glycero-3-phosphate + ADP + H(+). It carries out the reaction 1-O-hexadecyl-2-acetyl-sn-glycerol + ATP = 1-O-hexadecyl-2-acetyl-sn-glycero-3-phosphate + ADP + H(+). The enzyme catalyses 1-O-hexadecyl-2-(5Z,8Z,11Z,14Z-eicosatetraenoyl)-sn-glycerol + ATP = 1-O-hexadecyl-2-(5Z,8Z,11Z,14Z-eicosatetraenoyl)-sn-glycero-3-phosphate + ADP + H(+). The catalysed reaction is 1-O-hexadecyl-2-(9Z-octadecenoyl)-sn-glycerol + ATP = 1-O-hexadecyl-2-(9Z-octadecenoyl)-sn-glycero-3-phosphate + ADP + H(+). It catalyses the reaction 1-O-hexadecyl-sn-glycerol + ATP = 1-O-hexadecyl-sn-glycero-3-phosphate + ADP + H(+). It functions in the pathway lipid metabolism; glycerolipid metabolism. With respect to regulation, stimulated by calcium and phosphatidylserine. Its function is as follows. Diacylglycerol kinase that converts diacylglycerol/DAG into phosphatidic acid/phosphatidate/PA and regulates the respective levels of these two bioactive lipids. Thereby, acts as a central switch between the signaling pathways activated by these second messengers with different cellular targets and opposite effects in numerous biological processes. Also plays an important role in the biosynthesis of complex lipids. Can also phosphorylate 1-alkyl-2-acylglycerol in vitro as efficiently as diacylglycerol provided it contains an arachidonoyl group. Also involved in the production of alkyl-lysophosphatidic acid, another bioactive lipid, through the phosphorylation of 1-alkyl-2-acetyl glycerol. The polypeptide is Diacylglycerol kinase alpha (DGKA) (Sus scrofa (Pig)).